A 220-amino-acid chain; its full sequence is Histone deacetylase complex subunit SAP30 (220 aa).

The segment at 1–129 (MNGFTPEEMS…QSVRNRRKRK (129 aa)) is interaction with NCOR1. Phosphothreonine is present on threonine 5. An Atypical zinc finger spans residues 67–115 (CCLREDGERCGRAAGNASFSKRIQKSISQKKVKIELDKSARHLYICDYH). A Glycyl lysine isopeptide (Lys-Gly) (interchain with G-Cter in SUMO2) cross-link involves residue lysine 87. The segment at 123 to 143 (RNRRKRKGSDDDGGDSPVQDI) is disordered. Positions 130–220 (GSDDDGGDSP…SDLKADSGVH (91 aa)) are interaction with SIN3A. Serine 131 and serine 138 each carry phosphoserine. Threonine 145 carries the post-translational modification Phosphothreonine. Glycyl lysine isopeptide (Lys-Gly) (interchain with G-Cter in SUMO2) cross-links involve residues lysine 194 and lysine 214.

This sequence belongs to the SAP30 family. As to quaternary structure, component of the histone deacetylase complex that includes at least SIN3A, HDAC1 and HDAC2. Found in a complex composed of at least SINHCAF, SIN3A, HDAC1, SAP30, RBBP4, OGT and TET1. Interacts with HDAC1. Interacts with SIN3A, SIN3B, HDAC2, RBBP4 and NCOR1. Interacts directly with SAMSN1. Interacts with HCFC1. Interacts with SAP30BP.

It is found in the nucleus. In terms of biological role, involved in the functional recruitment of the Sin3-histone deacetylase complex (HDAC) to a specific subset of N-CoR corepressor complexes. Capable of transcription repression by N-CoR. Active in deacetylating core histone octamers (when in a complex) but inactive in deacetylating nucleosomal histones. The chain is Histone deacetylase complex subunit SAP30 from Mus musculus (Mouse).